The following is a 1060-amino-acid chain: Isoleucine--tRNA ligase (1060 aa).

The 'HIGH' region signature appears at P55–H65. Residues K608–H612 carry the 'KMSKS' region motif. K611 contributes to the ATP binding site.

Belongs to the class-I aminoacyl-tRNA synthetase family. IleS type 2 subfamily. In terms of assembly, monomer. Zn(2+) is required as a cofactor.

The protein localises to the cytoplasm. The enzyme catalyses tRNA(Ile) + L-isoleucine + ATP = L-isoleucyl-tRNA(Ile) + AMP + diphosphate. Functionally, catalyzes the attachment of isoleucine to tRNA(Ile). As IleRS can inadvertently accommodate and process structurally similar amino acids such as valine, to avoid such errors it has two additional distinct tRNA(Ile)-dependent editing activities. One activity is designated as 'pretransfer' editing and involves the hydrolysis of activated Val-AMP. The other activity is designated 'posttransfer' editing and involves deacylation of mischarged Val-tRNA(Ile). The protein is Isoleucine--tRNA ligase of Thermobifida fusca (strain YX).